Reading from the N-terminus, the 460-residue chain is Argininosuccinate lyase (460 aa).

The protein belongs to the lyase 1 family. Argininosuccinate lyase subfamily.

It localises to the cytoplasm. It carries out the reaction 2-(N(omega)-L-arginino)succinate = fumarate + L-arginine. It participates in amino-acid biosynthesis; L-arginine biosynthesis; L-arginine from L-ornithine and carbamoyl phosphate: step 3/3. The protein is Argininosuccinate lyase of Streptococcus mutans serotype c (strain ATCC 700610 / UA159).